The following is a 437-amino-acid chain: Protein arginine methyltransferase NDUFAF7 homolog, mitochondrial (437 aa).

The tract at residues 21-49 (RPNLGATGTPKMEPPKEQPEASSKAESGH) is disordered.

This sequence belongs to the NDUFAF7 family.

It is found in the mitochondrion. It catalyses the reaction L-arginyl-[protein] + 2 S-adenosyl-L-methionine = N(omega),N(omega)'-dimethyl-L-arginyl-[protein] + 2 S-adenosyl-L-homocysteine + 2 H(+). Functionally, arginine methyltransferase involved in the assembly or stability of mitochondrial NADH:ubiquinone oxidoreductase complex (complex I). The chain is Protein arginine methyltransferase NDUFAF7 homolog, mitochondrial from Drosophila melanogaster (Fruit fly).